The following is a 241-amino-acid chain: Adenosylcobinamide-GDP ribazoletransferase (241 aa).

5 helical membrane passes run 24-44 (IVFF…SIFY), 48-68 (FINQ…IYGF), 103-123 (VVTF…FNSI), 175-195 (VIIL…FSLI), and 218-238 (IIGF…LISF).

Belongs to the CobS family. It depends on Mg(2+) as a cofactor.

It is found in the cell membrane. The catalysed reaction is alpha-ribazole + adenosylcob(III)inamide-GDP = adenosylcob(III)alamin + GMP + H(+). It catalyses the reaction alpha-ribazole 5'-phosphate + adenosylcob(III)inamide-GDP = adenosylcob(III)alamin 5'-phosphate + GMP + H(+). It participates in cofactor biosynthesis; adenosylcobalamin biosynthesis; adenosylcobalamin from cob(II)yrinate a,c-diamide: step 7/7. Functionally, joins adenosylcobinamide-GDP and alpha-ribazole to generate adenosylcobalamin (Ado-cobalamin). Also synthesizes adenosylcobalamin 5'-phosphate from adenosylcobinamide-GDP and alpha-ribazole 5'-phosphate. The protein is Adenosylcobinamide-GDP ribazoletransferase of Picrophilus torridus (strain ATCC 700027 / DSM 9790 / JCM 10055 / NBRC 100828 / KAW 2/3).